The primary structure comprises 239 residues: Ribonuclease PH (239 aa).

Residues Arg-87 and 125–127 (GTR) contribute to the phosphate site.

It belongs to the RNase PH family. Homohexameric ring arranged as a trimer of dimers.

The catalysed reaction is tRNA(n+1) + phosphate = tRNA(n) + a ribonucleoside 5'-diphosphate. In terms of biological role, phosphorolytic 3'-5' exoribonuclease that plays an important role in tRNA 3'-end maturation. Removes nucleotide residues following the 3'-CCA terminus of tRNAs; can also add nucleotides to the ends of RNA molecules by using nucleoside diphosphates as substrates, but this may not be physiologically important. Probably plays a role in initiation of 16S rRNA degradation (leading to ribosome degradation) during starvation. The chain is Ribonuclease PH from Pseudomonas aeruginosa (strain LESB58).